The following is a 594-amino-acid chain: APOBEC1 complementation factor (594 aa).

RRM domains follow at residues 56-134, 136-218, and 231-303; these read CEIF…ASVD, CRLF…WAEP, and KILY…LAKP. Positions 359-408 are required for nuclear localization; sequence HFPATKGHLSNRALIRTPSVREIYMNVPVGAAGVRGLGGRGYLAYTGLGR. Threonine 498 is subject to Phosphothreonine.

As to quaternary structure, part of the apolipoprotein B mRNA editing complex with APOBEC1. Interacts with TNPO2; TNPO2 may be responsible for transport of A1CF into the nucleus. Interacts with SYNCRIP. Interacts with CELF2/CUGBP2. Interacts with RBM47. Isoforms 1 and 2 are widely expressed while isoforms 3 and 4 are restricted to liver and small intestine.

The protein resides in the nucleus. It is found in the endoplasmic reticulum. The protein localises to the cytoplasm. Functionally, essential component of the apolipoprotein B mRNA editing enzyme complex which is responsible for the postranscriptional editing of a CAA codon for Gln to a UAA codon for stop in APOB mRNA. Binds to APOB mRNA and is probably responsible for docking the catalytic subunit, APOBEC1, to the mRNA to allow it to deaminate its target cytosine. The complex also seems to protect the edited APOB mRNA from nonsense-mediated decay. This Rattus norvegicus (Rat) protein is APOBEC1 complementation factor (A1cf).